Reading from the N-terminus, the 431-residue chain is Adenylosuccinate synthetase (431 aa).

Residues 12–18 and 40–42 each bind GTP; these read GDEGKGK and GHT. The active-site Proton acceptor is Asp13. Asp13 and Gly40 together coordinate Mg(2+). IMP-binding positions include 13–16, 38–41, Thr131, Arg145, Gln225, Thr240, and Arg304; these read DEGK and NAGH. His41 serves as the catalytic Proton donor. Residue 300 to 306 participates in substrate binding; the sequence is TTTGRKR. GTP contacts are provided by residues Arg306, 332–334, and 414–416; these read KLD and STS.

The protein belongs to the adenylosuccinate synthetase family. In terms of assembly, homodimer. Mg(2+) is required as a cofactor.

The protein resides in the cytoplasm. The enzyme catalyses IMP + L-aspartate + GTP = N(6)-(1,2-dicarboxyethyl)-AMP + GDP + phosphate + 2 H(+). The protein operates within purine metabolism; AMP biosynthesis via de novo pathway; AMP from IMP: step 1/2. Functionally, plays an important role in the de novo pathway of purine nucleotide biosynthesis. Catalyzes the first committed step in the biosynthesis of AMP from IMP. This is Adenylosuccinate synthetase from Jannaschia sp. (strain CCS1).